Here is a 129-residue protein sequence, read N- to C-terminus: Natriuretic peptides B (129 aa).

The N-terminal stretch at 1–26 (MDPQKALSRTLLLLLFLHLSLLGCRS) is a signal peptide. Cys-107 and Cys-123 form a disulfide bridge.

The protein belongs to the natriuretic peptide family. The precursor molecule is proteolytically cleaved, possibly by FURIN or CORIN, to produce the active peptide. May undergo further proteolytic cleavage by various proteases such as DPP4, MME and possibly FAP, to give rise to a variety of shorter peptides. May be cleaved at Pro-99 by the prolyl endopeptidase FAP (seprase) activity (in vitro). May be degraded by IDE. During IDE degradation, the resulting products initially increase the activation of NPR1 and can also stimulate NPR2 to produce cGMP before the fragments are completely degraded and inactivated by IDE (in vitro).

The protein resides in the secreted. In terms of biological role, cardiac hormone that plays a key role in mediating cardio-renal homeostasis. May also function as a paracrine antifibrotic factor in the heart. Acts by specifically binding and stimulating NPR1 to produce cGMP, which in turn activates effector proteins that drive various biological responses. Involved in regulating the extracellular fluid volume and maintaining the fluid-electrolyte balance through natriuresis, diuresis, vasorelaxation, and inhibition of renin and aldosterone secretion. Binds the clearance receptor NPR3. The sequence is that of Natriuretic peptides B (NPPB) from Ovis aries (Sheep).